Here is a 120-residue protein sequence, read N- to C-terminus: Large ribosomal subunit protein bL19 (120 aa).

It belongs to the bacterial ribosomal protein bL19 family.

In terms of biological role, this protein is located at the 30S-50S ribosomal subunit interface and may play a role in the structure and function of the aminoacyl-tRNA binding site. The polypeptide is Large ribosomal subunit protein bL19 (Marinomonas sp. (strain MWYL1)).